Consider the following 181-residue polypeptide: Protein CRABS CLAW (181 aa).

The segment at 26 to 53 (CSICNTILAVGIPLKRMLDTVTVKCGHC) adopts a C4-type zinc-finger fold. Residues 80–122 (GSDYKKGSSSSSSSSTSSDQPPSPSPPFVVKPPEKKQRLPSAY) form a disordered region. Low complexity predominate over residues 87–99 (SSSSSSSSTSSDQ). A compositionally biased stretch (pro residues) spans 100–109 (PPSPSPPFVV).

The protein belongs to the YABBY family. In terms of tissue distribution, restricted to flowers, mostly in carpels and nectaries. Expressed at low levels in sepal primordia (buds), sepal receptacle and developing petal. Not detected in placental tissues, septum, stigma and ovules.

It localises to the nucleus. In terms of biological role, transcription factor required for the initiation of nectary development. Also involved in suppressing early radial growth of the gynoecium, in promoting its later elongation and in fusion of its carpels by regulating both cell division and expansion. Establishes the polar differentiation in the carpels by specifying abaxial cell fate in the ovary wall. Regulates both cell division and expansion. This is Protein CRABS CLAW from Arabidopsis thaliana (Mouse-ear cress).